The following is a 327-amino-acid chain: Ketol-acid reductoisomerase (NADP(+)) (327 aa).

Positions Ala-2–Thr-182 constitute a KARI N-terminal Rossmann domain. NADP(+)-binding positions include Tyr-25–Gln-28, Arg-48, Ser-53, and Asp-83–Gln-86. His-108 is a catalytic residue. Gly-134 contacts NADP(+). The KARI C-terminal knotted domain maps to Thr-183–Gly-327. The Mg(2+) site is built by Asp-191, Glu-195, Glu-227, and Glu-231. Ser-252 contributes to the substrate binding site.

It belongs to the ketol-acid reductoisomerase family. Mg(2+) serves as cofactor.

The enzyme catalyses (2R)-2,3-dihydroxy-3-methylbutanoate + NADP(+) = (2S)-2-acetolactate + NADPH + H(+). It carries out the reaction (2R,3R)-2,3-dihydroxy-3-methylpentanoate + NADP(+) = (S)-2-ethyl-2-hydroxy-3-oxobutanoate + NADPH + H(+). Its pathway is amino-acid biosynthesis; L-isoleucine biosynthesis; L-isoleucine from 2-oxobutanoate: step 2/4. It functions in the pathway amino-acid biosynthesis; L-valine biosynthesis; L-valine from pyruvate: step 2/4. Functionally, involved in the biosynthesis of branched-chain amino acids (BCAA). Catalyzes an alkyl-migration followed by a ketol-acid reduction of (S)-2-acetolactate (S2AL) to yield (R)-2,3-dihydroxy-isovalerate. In the isomerase reaction, S2AL is rearranged via a Mg-dependent methyl migration to produce 3-hydroxy-3-methyl-2-ketobutyrate (HMKB). In the reductase reaction, this 2-ketoacid undergoes a metal-dependent reduction by NADPH to yield (R)-2,3-dihydroxy-isovalerate. This Pyrobaculum neutrophilum (strain DSM 2338 / JCM 9278 / NBRC 100436 / V24Sta) (Thermoproteus neutrophilus) protein is Ketol-acid reductoisomerase (NADP(+)).